The chain runs to 130 residues: Protein ApaG (130 aa).

An ApaG domain is found at 3 to 127; the sequence is RALTRDIEVT…FSLDSPGLVR (125 aa).

The chain is Protein ApaG from Rhizobium meliloti (strain 1021) (Ensifer meliloti).